Consider the following 286-residue polypeptide: 5-amino-6-(5-phospho-D-ribitylamino)uracil phosphatase YwtE (286 aa).

The active-site Nucleophile is Asp7. Asp7 lines the Mg(2+) pocket. Leu8 contributes to the phosphate binding site. Asp9 is a Mg(2+) binding site. Residues 41-42 (TG) and Lys210 each bind phosphate. Positions 233 and 234 each coordinate Mg(2+). Asn236 contacts phosphate.

This sequence belongs to the HAD-like hydrolase superfamily. Cof family. The cofactor is Mg(2+).

The enzyme catalyses 5-amino-6-(5-phospho-D-ribitylamino)uracil + H2O = 5-amino-6-(D-ribitylamino)uracil + phosphate. It functions in the pathway cofactor biosynthesis; riboflavin biosynthesis; 5-amino-6-(D-ribitylamino)uracil from GTP: step 4/4. In terms of biological role, catalyzes the dephosphorylation of the riboflavin precursor 5-amino-6-(5-phospho-D-ribitylamino)uracil and of flavin mononucleotide (FMN) in vitro. Also catalyzes the dephosphorylation of phosphorylated 5-6 carbon sugars and monophosphate nucleotides (NMP) in vitro. The sequence is that of 5-amino-6-(5-phospho-D-ribitylamino)uracil phosphatase YwtE (ywtE) from Bacillus subtilis (strain 168).